The primary structure comprises 132 residues: MIVGLGTDIAEIERIEQKVPAAGDIKGLESCRLAKRVLTEPEMAIFIASKQPARYLAKRFAAKEAAAKALGTGIGRGVSFQHIEISNDTNGAPLISFNGGAADRLASLGGARAHISIADEKHYATATVILES.

Positions 8 and 64 each coordinate Mg(2+).

It belongs to the P-Pant transferase superfamily. AcpS family. Mg(2+) serves as cofactor.

It is found in the cytoplasm. The catalysed reaction is apo-[ACP] + CoA = holo-[ACP] + adenosine 3',5'-bisphosphate + H(+). Transfers the 4'-phosphopantetheine moiety from coenzyme A to a Ser of acyl-carrier-protein. This Shewanella woodyi (strain ATCC 51908 / MS32) protein is Holo-[acyl-carrier-protein] synthase.